A 124-amino-acid chain; its full sequence is MMLIIFLNVEITLKSLLMHNENLSVFILHTGDISESWQNDLQLYFAKRYSTLQLVHMISINTLDTSPNIFHFTGPHKPLDNIFSENACVNAVISLFRLYASISWQDICSLPLGTTRANWINQER.

This is an uncharacterized protein from Haemophilus influenzae (strain ATCC 51907 / DSM 11121 / KW20 / Rd).